The following is a 184-amino-acid chain: Photosystem I assembly protein Ycf4 (184 aa).

The next 2 membrane-spanning stretches (helical) occupy residues 22 to 42 and 57 to 77; these read FCWA…GISS and IIFF…LFIS.

It belongs to the Ycf4 family.

The protein localises to the plastid. Its subcellular location is the chloroplast thylakoid membrane. Seems to be required for the assembly of the photosystem I complex. This is Photosystem I assembly protein Ycf4 from Ipomoea purpurea (Common morning glory).